Reading from the N-terminus, the 395-residue chain is Nucleoside diphosphate kinase homolog 7 (395 aa).

Residues 22–110 enclose the DM10 domain; that stretch reads QSERFAFIAE…YTARQLGSRK (89 aa).

Belongs to the NDK family. In terms of assembly, component of sperm flagellar doublet microtubules. Component of the gamma-tubulin ring complex. As to expression, widely expressed. Expressed in the flagellum of epididymal sperm but not in testicular sperm (at protein level).

The protein resides in the cytoplasm. It localises to the cytoskeleton. The protein localises to the microtubule organizing center. It is found in the centrosome. Its subcellular location is the nucleus. The protein resides in the spindle. It localises to the cilium axoneme. The protein localises to the flagellum axoneme. It is found in the cell projection. Its subcellular location is the cilium. Possesses an intrinsic kinase activity. Displays 3'-5' exonuclease activity with a preference for single-stranded DNA. Does not seem to have nucleoside diphosphate kinase activity. Functional component of the gamma-tubulin ring complex, implicated in the regulation of the microtubule-nucleating activity of the gamma-tubulin ring complex in centrosomes, in a kinase activity-dependent manner. Part of the dynein-decorated doublet microtubules (DMTs) in cilia axoneme, which is required for motile cilia beating. The chain is Nucleoside diphosphate kinase homolog 7 (Nme7) from Rattus norvegicus (Rat).